The primary structure comprises 160 residues: Protein MGF 300-2R (160 aa).

This sequence belongs to the asfivirus MGF 300 family.

Its function is as follows. Plays a role in virus cell tropism, and may be required for efficient virus replication in macrophages. This is Protein MGF 300-2R from Ornithodoros (relapsing fever ticks).